The primary structure comprises 968 residues: Glycine dehydrogenase (decarboxylating) (968 aa).

Residue K713 is modified to N6-(pyridoxal phosphate)lysine.

This sequence belongs to the GcvP family. In terms of assembly, the glycine cleavage system is composed of four proteins: P, T, L and H. Pyridoxal 5'-phosphate is required as a cofactor.

The enzyme catalyses N(6)-[(R)-lipoyl]-L-lysyl-[glycine-cleavage complex H protein] + glycine + H(+) = N(6)-[(R)-S(8)-aminomethyldihydrolipoyl]-L-lysyl-[glycine-cleavage complex H protein] + CO2. Its function is as follows. The glycine cleavage system catalyzes the degradation of glycine. The P protein binds the alpha-amino group of glycine through its pyridoxal phosphate cofactor; CO(2) is released and the remaining methylamine moiety is then transferred to the lipoamide cofactor of the H protein. This is Glycine dehydrogenase (decarboxylating) from Variovorax paradoxus (strain S110).